We begin with the raw amino-acid sequence, 260 residues long: Adenosylcobinamide-GDP ribazoletransferase (260 aa).

The next 6 membrane-spanning stretches (helical) occupy residues 7–27, 45–65, 117–137, 145–165, 187–207, and 210–230; these read WYFLWGGDSVGAAILFYTRLP, LMGLLLSLILLALDRGLHWLG, AYGVMAIAVVLLLKTFALASF, WALIMALGWGRWGQLLAIALY, LLLGTMIIVFGGVGMGYALAI, and WLILGATGSSALIAWAVGRWF.

This sequence belongs to the CobS family. The cofactor is Mg(2+).

It is found in the cell inner membrane. It catalyses the reaction alpha-ribazole + adenosylcob(III)inamide-GDP = adenosylcob(III)alamin + GMP + H(+). It carries out the reaction alpha-ribazole 5'-phosphate + adenosylcob(III)inamide-GDP = adenosylcob(III)alamin 5'-phosphate + GMP + H(+). The protein operates within cofactor biosynthesis; adenosylcobalamin biosynthesis; adenosylcobalamin from cob(II)yrinate a,c-diamide: step 7/7. Its function is as follows. Joins adenosylcobinamide-GDP and alpha-ribazole to generate adenosylcobalamin (Ado-cobalamin). Also synthesizes adenosylcobalamin 5'-phosphate from adenosylcobinamide-GDP and alpha-ribazole 5'-phosphate. In Synechocystis sp. (strain ATCC 27184 / PCC 6803 / Kazusa), this protein is Adenosylcobinamide-GDP ribazoletransferase.